Here is a 291-residue protein sequence, read N- to C-terminus: MASGSEAEKSPEVVLEWPKKDKKRLLHAVYRVGDLDRTIKCYTECFGMKLLRKRDVPEEKYTNAFLGFGPEDTNFALELTYNYGVDKYDIGAGFGHFAIATEDVYKLAEKIKSSCCCKITREPGPVKGGSTVIAFAQDPDGYMFELIQRGPTPEPLCQVMLRVGDLDRSIKFYEKALGMKLLRKKDVPDYKYTIAMLGYADEDKTTVIELTYNYGVTEYTKGNAYAQVAIGTEDVYKSAEAVELVTKELGGKILRQPGPLPGLNTKIASFLDPDGWKVVLVDNADFLKELQ.

VOC domains follow at residues 24–149 (RLLH…LIQR) and 155–283 (PLCQ…LVDN). Positions 31, 82, and 96 each coordinate substrate. The active site involves His-96. The active-site Proton donor/acceptor is the Glu-145. A Ni(2+)-binding site is contributed by Glu-145. Residues Gln-158 and Glu-209 contribute to the active site. Glu-209 contributes to the Ni(2+) binding site.

This sequence belongs to the glyoxalase I family. Monomer. Requires Ni(2+) as cofactor. Phosphorylated after gibberellin treatment. In terms of tissue distribution, expressed in callus, stem, leaves, panicles and maturing seeds (at protein level).

The catalysed reaction is (R)-S-lactoylglutathione = methylglyoxal + glutathione. It functions in the pathway secondary metabolite metabolism; methylglyoxal degradation; (R)-lactate from methylglyoxal: step 1/2. Catalyzes the conversion of hemimercaptal, formed from methylglyoxal and glutathione, to S-lactoylglutathione. Involved in the detoxifiation of methylglyoxal. Can functionally complement growth defect of a yeast mutant lacking GLY I. Involved in abiotic stress response. Over-expression of GLYI-11 in tobacco increases tolerance to osmotic, oxidative and salt stresses. In Oryza sativa subsp. japonica (Rice), this protein is Lactoylglutathione lyase.